A 97-amino-acid chain; its full sequence is Co-chaperonin GroES (97 aa).

The protein belongs to the GroES chaperonin family. In terms of assembly, heptamer of 7 subunits arranged in a ring. Interacts with the chaperonin GroEL.

It localises to the cytoplasm. In terms of biological role, together with the chaperonin GroEL, plays an essential role in assisting protein folding. The GroEL-GroES system forms a nano-cage that allows encapsulation of the non-native substrate proteins and provides a physical environment optimized to promote and accelerate protein folding. GroES binds to the apical surface of the GroEL ring, thereby capping the opening of the GroEL channel. The protein is Co-chaperonin GroES of Pseudomonas putida (strain GB-1).